A 552-amino-acid polypeptide reads, in one-letter code: MPSADATRGGGSAGSMGKGTLGAGDTLGHKSVLDKQRAAIEKLRAQNEQLKTELLLENKFSVRPGDPFAQALINRLQDEGDMLARKIVLEMRKTKMLDQQLSEMGSTLTTTRNNMGGIFSAKEQSTAVQKRIKLLENRLEKAYVKYNQSITHNKQLRESINNLRRERIMFESIQSNLERELAKLKRDMADMIQQANGAFEAREKAIGEMNALKAQADKEQQGFEEEWRQLTTIIEEDKKERERARAQELAMRERETQELLKMGTLSSAEKKKRITKGSWNVGYNKAMAQNVAAEKVEMYGQAFKRIQDATGIEDIDQLVNTFLAAEDQNYTLFNYVNEVNQEIEKLEDQINIMRGEINKYRETGRELDMTKSRELTEEEARLAASEAQSQLYEKRTDSALSMTTALKAGINDLFERIGCNTPAVRDLLGEEGVTEANLTAYLGIIEQRTNEILQIYAKRKAQQGTDGLAEALLAQPLTQPGNRIIIEPPSTTQEEEVEGLEPEPVEEDRPLTREHLESKVQRTLPRKLETAIKVRPAGADATGGKRGSPTRR.

The disordered stretch occupies residues M1 to L27. The span at R8–G22 shows a compositional bias: gly residues. Coiled coils occupy residues G28–K59, S120–L260, and T331–R395. 2 disordered regions span residues N482–H515 and L528–R552. Residues Q493–E506 show a composition bias toward acidic residues.

Belongs to the ODA1/DCC2 family. In terms of assembly, component of the outer dynein arm complex.

The protein localises to the cytoplasm. It localises to the cytoskeleton. It is found in the cilium axoneme. Functionally, component of the outer dynein arm complex required for assembly of the outer dynein arm-docking complex (ODA-DC) and the outer dynein arm onto the doublet microtubule. The protein is Outer dynein arm protein 1 (ODA1) of Chlamydomonas reinhardtii (Chlamydomonas smithii).